Consider the following 347-residue polypeptide: 4-hydroxy-2-oxovalerate aldolase 2 (347 aa).

The Pyruvate carboxyltransferase domain maps to 9–259 (ITIVDTTLRD…DTGVDLFPLI (251 aa)). Residues 17–18 (RD), serine 171, and histidine 198 contribute to the substrate site. Mn(2+) is bound at residue aspartate 18. The Mn(2+) site is built by histidine 198 and histidine 200. Tyrosine 289 is a substrate binding site.

Belongs to the 4-hydroxy-2-oxovalerate aldolase family.

The enzyme catalyses (S)-4-hydroxy-2-oxopentanoate = acetaldehyde + pyruvate. This is 4-hydroxy-2-oxovalerate aldolase 2 from Rhodococcus opacus (strain B4).